Reading from the N-terminus, the 309-residue chain is Homoserine kinase (309 aa).

Residue 91 to 101 coordinates ATP; it reads PIGSGLGSSAC.

The protein belongs to the GHMP kinase family. Homoserine kinase subfamily.

Its subcellular location is the cytoplasm. The catalysed reaction is L-homoserine + ATP = O-phospho-L-homoserine + ADP + H(+). It functions in the pathway amino-acid biosynthesis; L-threonine biosynthesis; L-threonine from L-aspartate: step 4/5. Functionally, catalyzes the ATP-dependent phosphorylation of L-homoserine to L-homoserine phosphate. The protein is Homoserine kinase of Buchnera aphidicola subsp. Acyrthosiphon pisum (strain APS) (Acyrthosiphon pisum symbiotic bacterium).